A 203-amino-acid polypeptide reads, in one-letter code: Holliday junction branch migration complex subunit RuvA (203 aa).

The domain I stretch occupies residues 1 to 63 (MIGQLSGKVD…EEHIHLYGFL (63 aa)). Positions 64–142 (NLEEKIFFNL…KISSGSAIIK (79 aa)) are domain II. The tract at residues 143 to 149 (ESLNIKH) is flexible linker. Positions 150–203 (ITPVASNEVIKALVNLGFSRFEAQNAVQGIITQNPEISIDELIKTALKNRNSNF) are domain III.

Belongs to the RuvA family. As to quaternary structure, homotetramer. Forms an RuvA(8)-RuvB(12)-Holliday junction (HJ) complex. HJ DNA is sandwiched between 2 RuvA tetramers; dsDNA enters through RuvA and exits via RuvB. An RuvB hexamer assembles on each DNA strand where it exits the tetramer. Each RuvB hexamer is contacted by two RuvA subunits (via domain III) on 2 adjacent RuvB subunits; this complex drives branch migration. In the full resolvosome a probable DNA-RuvA(4)-RuvB(12)-RuvC(2) complex forms which resolves the HJ.

The protein localises to the cytoplasm. The RuvA-RuvB-RuvC complex processes Holliday junction (HJ) DNA during genetic recombination and DNA repair, while the RuvA-RuvB complex plays an important role in the rescue of blocked DNA replication forks via replication fork reversal (RFR). RuvA specifically binds to HJ cruciform DNA, conferring on it an open structure. The RuvB hexamer acts as an ATP-dependent pump, pulling dsDNA into and through the RuvAB complex. HJ branch migration allows RuvC to scan DNA until it finds its consensus sequence, where it cleaves and resolves the cruciform DNA. The polypeptide is Holliday junction branch migration complex subunit RuvA (Rickettsia africae (strain ESF-5)).